Consider the following 283-residue polypeptide: Putative aquaporin NIP4-1 (283 aa).

The residue at position 1 (Met1) is an N-acetylmethionine. A run of 2 helical transmembrane segments spans residues 45 to 65 (LIAE…VVVV) and 70 to 90 (GGTI…MVMI). The NPA 1 motif lies at 102–104 (NPA). The next 3 helical transmembrane spans lie at 122–142 (LYIG…RLMF), 161–181 (ALVA…GVAT), and 189–209 (LAGI…GPIS). An NPA 2 motif is present at residues 214–216 (NPA). Residues 231-251 (IWVYIVGPVLGVISGGFVYNL) traverse the membrane as a helical segment. Ser267 bears the Phosphoserine mark.

It belongs to the MIP/aquaporin (TC 1.A.8) family. NIP (TC 1.A.8.12) subfamily.

The protein resides in the membrane. Its function is as follows. Potential aquaporin, which may facilitate the transport of water and small neutral solutes across cell membranes. The polypeptide is Putative aquaporin NIP4-1 (NIP4-1) (Arabidopsis thaliana (Mouse-ear cress)).